A 233-amino-acid polypeptide reads, in one-letter code: Large ribosomal subunit protein uL1 (233 aa).

Belongs to the universal ribosomal protein uL1 family. In terms of assembly, part of the 50S ribosomal subunit.

Binds directly to 23S rRNA. The L1 stalk is quite mobile in the ribosome, and is involved in E site tRNA release. Functionally, protein L1 is also a translational repressor protein, it controls the translation of the L11 operon by binding to its mRNA. This Geotalea uraniireducens (strain Rf4) (Geobacter uraniireducens) protein is Large ribosomal subunit protein uL1.